The sequence spans 293 residues: Undecaprenyl-diphosphatase (293 aa).

Transmembrane regions (helical) follow at residues 74–94 (VLVF…AGVF), 107–127 (WMII…KDLI), 134–154 (MWIT…AEKM), 209–229 (FLLA…DAFA), 243–263 (VGTL…MKFV), and 271–291 (FAAY…LGML).

The protein belongs to the UppP family.

The protein localises to the cell membrane. It carries out the reaction di-trans,octa-cis-undecaprenyl diphosphate + H2O = di-trans,octa-cis-undecaprenyl phosphate + phosphate + H(+). Catalyzes the dephosphorylation of undecaprenyl diphosphate (UPP). Confers resistance to bacitracin. This Corynebacterium glutamicum (strain ATCC 13032 / DSM 20300 / JCM 1318 / BCRC 11384 / CCUG 27702 / LMG 3730 / NBRC 12168 / NCIMB 10025 / NRRL B-2784 / 534) protein is Undecaprenyl-diphosphatase.